Here is a 273-residue protein sequence, read N- to C-terminus: Dermonecrotic toxin LdSicTox-alphaIB3aiii (273 aa).

Residue H5 is part of the active site. Mg(2+)-binding residues include E25 and D27. The active-site Nucleophile is the H41. Disulfide bonds link C45-C51 and C47-C190. Residue D85 participates in Mg(2+) binding.

This sequence belongs to the arthropod phospholipase D family. Class II subfamily. Mg(2+) is required as a cofactor. Expressed by the venom gland.

Its subcellular location is the secreted. The catalysed reaction is an N-(acyl)-sphingosylphosphocholine = an N-(acyl)-sphingosyl-1,3-cyclic phosphate + choline. It carries out the reaction an N-(acyl)-sphingosylphosphoethanolamine = an N-(acyl)-sphingosyl-1,3-cyclic phosphate + ethanolamine. The enzyme catalyses a 1-acyl-sn-glycero-3-phosphocholine = a 1-acyl-sn-glycero-2,3-cyclic phosphate + choline. It catalyses the reaction a 1-acyl-sn-glycero-3-phosphoethanolamine = a 1-acyl-sn-glycero-2,3-cyclic phosphate + ethanolamine. In terms of biological role, dermonecrotic toxins cleave the phosphodiester linkage between the phosphate and headgroup of certain phospholipids (sphingolipid and lysolipid substrates), forming an alcohol (often choline) and a cyclic phosphate. This toxin acts on sphingomyelin (SM). It may also act on ceramide phosphoethanolamine (CPE), lysophosphatidylcholine (LPC) and lysophosphatidylethanolamine (LPE), but not on lysophosphatidylserine (LPS), and lysophosphatidylglycerol (LPG). It acts by transphosphatidylation, releasing exclusively cyclic phosphate products as second products. Induces dermonecrosis, hemolysis, increased vascular permeability, edema, inflammatory response, and platelet aggregation. The polypeptide is Dermonecrotic toxin LdSicTox-alphaIB3aiii (Loxosceles deserta (Desert recluse spider)).